A 166-amino-acid chain; its full sequence is Crossover junction endodeoxyribonuclease RuvC (166 aa).

Catalysis depends on residues D9, E70, and D144. Residues D9, E70, and D144 each contribute to the Mg(2+) site.

Belongs to the RuvC family. In terms of assembly, homodimer which binds Holliday junction (HJ) DNA. The HJ becomes 2-fold symmetrical on binding to RuvC with unstacked arms; it has a different conformation from HJ DNA in complex with RuvA. In the full resolvosome a probable DNA-RuvA(4)-RuvB(12)-RuvC(2) complex forms which resolves the HJ. It depends on Mg(2+) as a cofactor.

The protein localises to the cytoplasm. The enzyme catalyses Endonucleolytic cleavage at a junction such as a reciprocal single-stranded crossover between two homologous DNA duplexes (Holliday junction).. The RuvA-RuvB-RuvC complex processes Holliday junction (HJ) DNA during genetic recombination and DNA repair. Endonuclease that resolves HJ intermediates. Cleaves cruciform DNA by making single-stranded nicks across the HJ at symmetrical positions within the homologous arms, yielding a 5'-phosphate and a 3'-hydroxyl group; requires a central core of homology in the junction. The consensus cleavage sequence is 5'-(A/T)TT(C/G)-3'. Cleavage occurs on the 3'-side of the TT dinucleotide at the point of strand exchange. HJ branch migration catalyzed by RuvA-RuvB allows RuvC to scan DNA until it finds its consensus sequence, where it cleaves and resolves the cruciform DNA. The protein is Crossover junction endodeoxyribonuclease RuvC of Neorickettsia sennetsu (strain ATCC VR-367 / Miyayama) (Ehrlichia sennetsu).